Here is a 199-residue protein sequence, read N- to C-terminus: Ribonuclease HII (199 aa).

The region spanning 10–199 (HLVAGVDEVG…VKRALGLASN (190 aa)) is the RNase H type-2 domain. Residues aspartate 16, glutamate 17, and aspartate 108 each contribute to the a divalent metal cation site.

It belongs to the RNase HII family. It depends on Mn(2+) as a cofactor. The cofactor is Mg(2+).

It is found in the cytoplasm. It catalyses the reaction Endonucleolytic cleavage to 5'-phosphomonoester.. Its function is as follows. Endonuclease that specifically degrades the RNA of RNA-DNA hybrids. This is Ribonuclease HII from Klebsiella pneumoniae (strain 342).